The sequence spans 412 residues: Carboxypeptidase B1 (412 aa).

Residues 1–18 (MIPRIVVVLLSVLAVVTA) form the signal peptide. Residues 19 to 75 (RRSYEGYKVYGIVPESPDEAEILYQIRQSNPDLDFWHLTKQPGDEARVLVAPKDQRS) constitute a propeptide, activation peptide. Positions 118 to 408 (SYLRHNEINE…VGIKAMALKV (291 aa)) constitute a Peptidase M14 domain. 2 residues coordinate Zn(2+): histidine 175 and glutamate 178. 175 to 178 (HARE) provides a ligand contact to a peptide. Asparagine 205 carries N-linked (GlcNAc...) asparagine glycosylation. A peptide-binding positions include arginine 230 and 246 to 247 (NR). Cysteine 240 and cysteine 263 form a disulfide bridge. Histidine 299 contacts Zn(2+). Residues 300-301 (SY) and tyrosine 351 each bind a peptide. Glutamate 374 (proton donor/acceptor) is an active-site residue. Asparagine 395 is a glycosylation site (N-linked (GlcNAc...) asparagine).

This sequence belongs to the peptidase M14 family. In terms of assembly, monomer. Interacts with Dengue virus type 2 (DENV2, MY89-88549 strain) envelope protein E. Interacts with Dengue virus envelope protein E type 3, type 2, type 4 and type 1 with decreasing strength. Zn(2+) serves as cofactor. Expressed in midgut (at protein level).

The protein resides in the endoplasmic reticulum. The catalysed reaction is Preferential release of a C-terminal lysine or arginine amino acid.. Inhibited by S.tuberosum metallocarboxypeptidase inhibitor. Functionally, carboxypeptidase that preferentially hydrolyzes arginine and lysine residues at the C-terminus. During infection by dengue virus, may play a role in preventing viral packaging, maturation, and release from the midgut. In Aedes aegypti (Yellowfever mosquito), this protein is Carboxypeptidase B1.